We begin with the raw amino-acid sequence, 156 residues long: Tripartite terminase subunit 2 (156 aa).

Residues M1–S37 are disordered. Residues S19–S37 are compositionally biased toward polar residues.

It belongs to the herpesviridae TRM2 protein family. As to quaternary structure, associates with TRM1 and TRM3 to form the tripartite terminase complex.

Its subcellular location is the host nucleus. In terms of biological role, component of the molecular motor that translocates viral genomic DNA in empty capsid during DNA packaging. Forms a tripartite terminase complex together with TRM1 and TRM3 in the host cytoplasm. Once the complex reaches the host nucleus, it interacts with the capsid portal vertex. This portal forms a ring in which genomic DNA is translocated into the capsid. This chain is Tripartite terminase subunit 2, found in Varicella-zoster virus (strain Dumas) (HHV-3).